Reading from the N-terminus, the 525-residue chain is GMP synthase [glutamine-hydrolyzing] (525 aa).

The 199-residue stretch at 9 to 207 folds into the Glutamine amidotransferase type-1 domain; it reads RILILDFGSQ…VRDICQCEAL (199 aa). The Nucleophile role is filled by Cys86. Active-site residues include His181 and Glu183. The 193-residue stretch at 208–400 folds into the GMPS ATP-PPase domain; the sequence is WTPAKIIDDA…LGLPYDMLYR (193 aa). ATP is bound at residue 235–241; that stretch reads SGGVDSS.

Homodimer.

The catalysed reaction is XMP + L-glutamine + ATP + H2O = GMP + L-glutamate + AMP + diphosphate + 2 H(+). It participates in purine metabolism; GMP biosynthesis; GMP from XMP (L-Gln route): step 1/1. Functionally, catalyzes the synthesis of GMP from XMP. The polypeptide is GMP synthase [glutamine-hydrolyzing] (Escherichia fergusonii (strain ATCC 35469 / DSM 13698 / CCUG 18766 / IAM 14443 / JCM 21226 / LMG 7866 / NBRC 102419 / NCTC 12128 / CDC 0568-73)).